The following is a 243-amino-acid chain: Uridylate kinase (243 aa).

Lysine 12–glycine 15 contacts ATP. The involved in allosteric activation by GTP stretch occupies residues glycine 20–glycine 25. Residue glycine 56 coordinates UMP. Residues glycine 57 and arginine 61 each contribute to the ATP site. Residues aspartate 76 and threonine 137–threonine 144 contribute to the UMP site. Asparagine 165, tyrosine 171, and aspartate 174 together coordinate ATP.

This sequence belongs to the UMP kinase family. Homohexamer.

The protein localises to the cytoplasm. The enzyme catalyses UMP + ATP = UDP + ADP. It participates in pyrimidine metabolism; CTP biosynthesis via de novo pathway; UDP from UMP (UMPK route): step 1/1. With respect to regulation, allosterically activated by GTP. Inhibited by UTP. Catalyzes the reversible phosphorylation of UMP to UDP. The chain is Uridylate kinase from Oenococcus oeni (strain ATCC BAA-331 / PSU-1).